A 207-amino-acid chain; its full sequence is Small ribosomal subunit protein uS4 (207 aa).

Positions 31–51 (KCKLDSKPGQHGRTSGARTSD) are disordered. Positions 97-160 (SRLDNVVYRM…KKQARIRESL (64 aa)) constitute an S4 RNA-binding domain.

The protein belongs to the universal ribosomal protein uS4 family. Part of the 30S ribosomal subunit. Contacts protein S5. The interaction surface between S4 and S5 is involved in control of translational fidelity.

In terms of biological role, one of the primary rRNA binding proteins, it binds directly to 16S rRNA where it nucleates assembly of the body of the 30S subunit. Functionally, with S5 and S12 plays an important role in translational accuracy. The protein is Small ribosomal subunit protein uS4 of Bordetella avium (strain 197N).